A 350-amino-acid chain; its full sequence is Casein kinase II subunit alpha' (350 aa).

A Protein kinase domain is found at 40–325 (YQLVRKLGRG…AKEAMEHPYF (286 aa)). ATP-binding positions include 46 to 54 (LGRGKYSEV) and K69. D157 (proton acceptor) is an active-site residue.

Belongs to the protein kinase superfamily. Ser/Thr protein kinase family. CK2 subfamily. As to quaternary structure, tetramer composed of an alpha chain, an alpha' and two beta chains.

The catalysed reaction is L-seryl-[protein] + ATP = O-phospho-L-seryl-[protein] + ADP + H(+). The enzyme catalyses L-threonyl-[protein] + ATP = O-phospho-L-threonyl-[protein] + ADP + H(+). In terms of biological role, casein kinases are operationally defined by their preferential utilization of acidic proteins such as caseins as substrates. The alpha and alpha' chains contain the catalytic site. Participates in Wnt signaling. This is Casein kinase II subunit alpha' from Gallus gallus (Chicken).